A 573-amino-acid polypeptide reads, in one-letter code: Protein FAM227B (573 aa).

Residues 429–485 are a coiled coil; sequence DNKKDFKRVKQRIKDDIKFLKEQQEQIDKELDRLQAKASKNLQEVKNDFENFLHKLR. Residues 497–521 are compositionally biased toward low complexity; sequence SASPSESLQSLQSPNSSLSSPAMSE. The interval 497 to 528 is disordered; the sequence is SASPSESLQSLQSPNSSLSSPAMSEDFNSVEE.

This sequence belongs to the FAM227 family.

The protein is Protein FAM227B (Fam227b) of Rattus norvegicus (Rat).